We begin with the raw amino-acid sequence, 350 residues long: MEDETLEDGPEEEEEDEEEGTAEETNQDVTERDEEEEAEKDEEEDKEEEEEAEKEEPPPHMPLSEEMLRDGLSLLCKTGNGLAHAYVKLEVKERELTDISVLQSFIHLRYVDLSQNSLQDLSPLGALTHLLSLRADHNQLVSVSGLGELPYLQVASFAQNRIKSLQGFGHPRLETLNLIGNELRDLEGLECSNLSSLHTLELRSNQLLSTAGLNLPSLRELYLGQNNISRLEGLEALVNLTTLHLRDNQLESLDGFSEHLQALQYLNLRSNMVAKLQEVQKLYCLPRLRALVLRENPCEEEEGYRMETLIALPQLERLDKDFFEEEEKREAAETKKAREEEMAEPGEKGN.

Positions 1–54 (MEDETLEDGPEEEEEDEEEGTAEETNQDVTERDEEEEAEKDEEEDKEEEEEAEK) are enriched in acidic residues. Residues 1-64 (MEDETLEDGP…EEPPPHMPLS (64 aa)) are disordered. LRR repeat units lie at residues 107-128 (HLRY…GALT), 129-150 (HLLS…GELP), 151-171 (YLQV…FGHP), 172-193 (RLET…ECSN), 196-216 (SLHT…LNLP), 217-238 (SLRE…EALV), 239-260 (NLTT…SEHL), and 262-283 (ALQY…QKLY). Residues 296–334 (NPCEEEEGYRMETLIALPQLERLDKDFFEEEEKREAAET) enclose the LRRCT domain. A coiled-coil region spans residues 314–344 (QLERLDKDFFEEEEKREAAETKKAREEEMAE). The disordered stretch occupies residues 325–350 (EEEKREAAETKKAREEEMAEPGEKGN).

It is found in the cytoplasm. The protein resides in the cytoskeleton. It localises to the flagellum axoneme. This Xenopus tropicalis (Western clawed frog) protein is Leucine-rich repeat-containing protein 23 (lrrc23).